Consider the following 378-residue polypeptide: Deoxyguanosinetriphosphate triphosphohydrolase-like protein (378 aa).

Positions 62–198 constitute an HD domain; it reads RLTHTIEVAQ…AAVADDVAYN (137 aa).

The protein belongs to the dGTPase family. Type 2 subfamily.

The sequence is that of Deoxyguanosinetriphosphate triphosphohydrolase-like protein from Paracoccus denitrificans (strain Pd 1222).